The following is a 352-amino-acid chain: Molybdenum import ATP-binding protein ModC (352 aa).

The region spanning 1–229 is the ABC transporter domain; the sequence is MLELNFSQTL…SVMNPWLPKE (229 aa). 31–38 contacts ATP; that stretch reads GVSGAGKT. The region spanning 289 to 352 is the Mop domain; sequence QTSIRNVLRA…AQIKSVSITA (64 aa).

Belongs to the ABC transporter superfamily. Molybdate importer (TC 3.A.1.8) family. As to quaternary structure, the complex is composed of two ATP-binding proteins (ModC), two transmembrane proteins (ModB) and a solute-binding protein (ModA).

It is found in the cell inner membrane. The catalysed reaction is molybdate(out) + ATP + H2O = molybdate(in) + ADP + phosphate + H(+). In terms of biological role, part of the ABC transporter complex ModABC involved in molybdenum import. Responsible for energy coupling to the transport system. This chain is Molybdenum import ATP-binding protein ModC, found in Shigella flexneri.